The sequence spans 289 residues: Delta-sarcoglycan (289 aa).

Residues 1 to 35 (MPQEQYTHHRSTMPGSVGPQVYKVGIYGWRKRCLY) are Cytoplasmic-facing. The helical; Signal-anchor for type II membrane protein transmembrane segment at 36-56 (FFVLLLMILILVNLAMTIWIL) threads the bilayer. Residues 57–289 (KVMNFTIDGM…TCQINTSVCL (233 aa)) are Extracellular-facing. N-linked (GlcNAc...) asparagine glycans are attached at residues Asn-60 and Asn-108. 2 disulfide bridges follow: Cys-263/Cys-288 and Cys-265/Cys-281. A glycan (N-linked (GlcNAc...) asparagine) is linked at Asn-284.

This sequence belongs to the sarcoglycan beta/delta/gamma/zeta family. As to quaternary structure, interacts with FLNC and DAG1. Cross-link to form 2 major subcomplexes: one consisting of SGCB, SGCD and SGCG and the other consisting of SGCB and SGCD. The association between SGCB and SGCG is particularly strong while SGCA is loosely associated with the other sarcoglycans. Glycosylated. Post-translationally, disulfide bonds are present. As to expression, most strongly expressed in skeletal and cardiac muscle. Also detected in smooth muscle. Weak expression in brain and lung.

Its subcellular location is the cell membrane. The protein localises to the sarcolemma. The protein resides in the cytoplasm. It is found in the cytoskeleton. Functionally, component of the sarcoglycan complex, a subcomplex of the dystrophin-glycoprotein complex which forms a link between the F-actin cytoskeleton and the extracellular matrix. This Homo sapiens (Human) protein is Delta-sarcoglycan (SGCD).